The sequence spans 464 residues: Soluble pyridine nucleotide transhydrogenase (464 aa).

35–44 contacts FAD; that stretch reads DSRRQVGGNC.

It belongs to the class-I pyridine nucleotide-disulfide oxidoreductase family. FAD is required as a cofactor.

The protein localises to the cytoplasm. The enzyme catalyses NAD(+) + NADPH = NADH + NADP(+). Conversion of NADPH, generated by peripheral catabolic pathways, to NADH, which can enter the respiratory chain for energy generation. The sequence is that of Soluble pyridine nucleotide transhydrogenase from Pseudomonas fluorescens (strain Pf0-1).